We begin with the raw amino-acid sequence, 427 residues long: 3-phosphoshikimate 1-carboxyvinyltransferase (427 aa).

Residues Lys22, Ser23, and Arg27 each contribute to the 3-phosphoshikimate site. Residue Lys22 coordinates phosphoenolpyruvate. 2 residues coordinate phosphoenolpyruvate: Gly96 and Arg124. Positions 169, 170, 171, 197, 313, 336, and 340 each coordinate 3-phosphoshikimate. Residue Gln171 coordinates phosphoenolpyruvate. The active-site Proton acceptor is the Asp313. Residues Arg344, Arg386, and Lys411 each contribute to the phosphoenolpyruvate site.

Belongs to the EPSP synthase family. As to quaternary structure, monomer.

Its subcellular location is the cytoplasm. It carries out the reaction 3-phosphoshikimate + phosphoenolpyruvate = 5-O-(1-carboxyvinyl)-3-phosphoshikimate + phosphate. It participates in metabolic intermediate biosynthesis; chorismate biosynthesis; chorismate from D-erythrose 4-phosphate and phosphoenolpyruvate: step 6/7. Catalyzes the transfer of the enolpyruvyl moiety of phosphoenolpyruvate (PEP) to the 5-hydroxyl of shikimate-3-phosphate (S3P) to produce enolpyruvyl shikimate-3-phosphate and inorganic phosphate. The sequence is that of 3-phosphoshikimate 1-carboxyvinyltransferase from Klebsiella pneumoniae (strain 342).